A 175-amino-acid polypeptide reads, in one-letter code: Peptide deformylase (175 aa).

Residues C94 and H136 each coordinate Fe cation. Residue E137 is part of the active site. H140 is a binding site for Fe cation.

It belongs to the polypeptide deformylase family. Requires Fe(2+) as cofactor.

The enzyme catalyses N-terminal N-formyl-L-methionyl-[peptide] + H2O = N-terminal L-methionyl-[peptide] + formate. Removes the formyl group from the N-terminal Met of newly synthesized proteins. Requires at least a dipeptide for an efficient rate of reaction. N-terminal L-methionine is a prerequisite for activity but the enzyme has broad specificity at other positions. This is Peptide deformylase from Brucella suis biovar 1 (strain 1330).